The following is a 445-amino-acid chain: Histidinol dehydrogenase (445 aa).

3 residues coordinate NAD(+): Tyr-138, Gln-199, and Asn-222. Substrate-binding residues include Ser-245, Gln-267, and His-270. Positions 267 and 270 each coordinate Zn(2+). Residues Glu-335 and His-336 each act as proton acceptor in the active site. The substrate site is built by His-336, Asp-369, Glu-423, and His-428. Residue Asp-369 coordinates Zn(2+). Residue His-428 coordinates Zn(2+).

It belongs to the histidinol dehydrogenase family. Zn(2+) is required as a cofactor.

The enzyme catalyses L-histidinol + 2 NAD(+) + H2O = L-histidine + 2 NADH + 3 H(+). It functions in the pathway amino-acid biosynthesis; L-histidine biosynthesis; L-histidine from 5-phospho-alpha-D-ribose 1-diphosphate: step 9/9. Functionally, catalyzes the sequential NAD-dependent oxidations of L-histidinol to L-histidinaldehyde and then to L-histidine. The polypeptide is Histidinol dehydrogenase (Burkholderia mallei (strain ATCC 23344)).